The following is a 581-amino-acid chain: Sulfate adenylyltransferase (581 aa).

The segment at 1 to 176 is N-terminal; the sequence is MANAPHGGVL…VQAIQAPTHF (176 aa). Positions 177-401 are catalytic; that stretch reads DYVPLRYTPA…LRESYPPRPQ (225 aa). Gln-204 contributes to the sulfate binding site. Residues 204 to 207 and 298 to 301 contribute to the ATP site; these read QTRN and GRDH. Residues Thr-205, Arg-206, and Asn-207 contribute to the active site. Arg-206 is a binding site for sulfate. Position 302 (Ala-302) interacts with sulfate. Position 340 (Met-340) interacts with ATP. Residues 402-581 form an allosteric regulation domain; adenylyl-sulfate kinase-like region; it reads QGFTILLTGL…IMILESQNLV (180 aa). 3'-phosphoadenylyl sulfate contacts are provided by residues 441-444, 486-487, and Arg-526; these read EELR and TA.

This sequence in the N-terminal section; belongs to the sulfate adenylyltransferase family. In the C-terminal section; belongs to the APS kinase family. Homohexamer. Dimer of trimers.

The protein resides in the cytoplasm. It carries out the reaction sulfate + ATP + H(+) = adenosine 5'-phosphosulfate + diphosphate. It functions in the pathway sulfur metabolism; hydrogen sulfide biosynthesis; sulfite from sulfate: step 1/3. With respect to regulation, allosterically inhibited by 3'-phosphoadenosine 5'-phosphosulfate (PAPS). Its function is as follows. Catalyzes the first intracellular reaction of sulfate assimilation, forming adenosine-5'-phosphosulfate (APS) from inorganic sulfate and ATP. Plays an important role in sulfate activation as a component of the biosynthesis pathway of sulfur-containing amino acids. This Cryptococcus neoformans var. grubii serotype A (strain H99 / ATCC 208821 / CBS 10515 / FGSC 9487) (Filobasidiella neoformans var. grubii) protein is Sulfate adenylyltransferase.